A 396-amino-acid polypeptide reads, in one-letter code: Tryptophan synthase beta chain (396 aa).

N6-(pyridoxal phosphate)lysine is present on lysine 88.

The protein belongs to the TrpB family. As to quaternary structure, tetramer of two alpha and two beta chains. The cofactor is pyridoxal 5'-phosphate.

It carries out the reaction (1S,2R)-1-C-(indol-3-yl)glycerol 3-phosphate + L-serine = D-glyceraldehyde 3-phosphate + L-tryptophan + H2O. It participates in amino-acid biosynthesis; L-tryptophan biosynthesis; L-tryptophan from chorismate: step 5/5. The beta subunit is responsible for the synthesis of L-tryptophan from indole and L-serine. The protein is Tryptophan synthase beta chain of Shewanella oneidensis (strain ATCC 700550 / JCM 31522 / CIP 106686 / LMG 19005 / NCIMB 14063 / MR-1).